We begin with the raw amino-acid sequence, 200 residues long: Phosphatidylethanolamine N-methyltransferase B (200 aa).

Topologically, residues methionine 1–aspartate 8 are lumenal. The segment at residues leucine 9–phenylalanine 29 is an intramembrane region (helical). Topologically, residues glutamate 30–leucine 39 are lumenal. Residues isoleucine 40–isoleucine 58 traverse the membrane as a helical segment. Residues arginine 59–glycine 86 lie on the Cytoplasmic side of the membrane. Residues aspartate 87–lysine 107 traverse the membrane as a helical segment. Residue isoleucine 91–glycine 93 participates in S-adenosyl-L-methionine binding. The Lumenal portion of the chain corresponds to glycine 108 to asparagine 150. Residues glutamine 151–threonine 171 form a helical membrane-spanning segment. Residues phenylalanine 172 to asparagine 200 lie on the Cytoplasmic side of the membrane. Glutamate 174–threonine 175 lines the S-adenosyl-L-methionine pocket.

The protein belongs to the class VI-like SAM-binding methyltransferase superfamily. PEMT/PEM2 methyltransferase family.

The protein localises to the endoplasmic reticulum membrane. The protein resides in the mitochondrion membrane. The catalysed reaction is a 1,2-diacyl-sn-glycero-3-phospho-N-methylethanolamine + S-adenosyl-L-methionine = a 1,2-diacyl-sn-glycero-3-phospho-N,N-dimethylethanolamine + S-adenosyl-L-homocysteine + H(+). The enzyme catalyses a 1,2-diacyl-sn-glycero-3-phospho-N,N-dimethylethanolamine + S-adenosyl-L-methionine = a 1,2-diacyl-sn-glycero-3-phosphocholine + S-adenosyl-L-homocysteine + H(+). It catalyses the reaction a 1,2-diacyl-sn-glycero-3-phosphoethanolamine + S-adenosyl-L-methionine = a 1,2-diacyl-sn-glycero-3-phospho-N-methylethanolamine + S-adenosyl-L-homocysteine + H(+). The protein operates within phospholipid metabolism; phosphatidylcholine biosynthesis. Functionally, catalyzes the three sequential steps of the methylation pathway of phosphatidylcholine biosynthesis, the SAM-dependent methylation of phosphatidylethanolamine (PE) to phosphatidylmonomethylethanolamine (PMME), PMME to phosphatidyldimethylethanolamine (PDME), and PDME to phosphatidylcholine (PC). The sequence is that of Phosphatidylethanolamine N-methyltransferase B (pemtB) from Dictyostelium discoideum (Social amoeba).